Here is a 288-residue protein sequence, read N- to C-terminus: ATP synthase gamma chain (288 aa).

It belongs to the ATPase gamma chain family. F-type ATPases have 2 components, CF(1) - the catalytic core - and CF(0) - the membrane proton channel. CF(1) has five subunits: alpha(3), beta(3), gamma(1), delta(1), epsilon(1). CF(0) has three main subunits: a, b and c.

Its subcellular location is the cell membrane. In terms of biological role, produces ATP from ADP in the presence of a proton gradient across the membrane. The gamma chain is believed to be important in regulating ATPase activity and the flow of protons through the CF(0) complex. This Macrococcus caseolyticus (strain JCSC5402) (Macrococcoides caseolyticum) protein is ATP synthase gamma chain.